Consider the following 85-residue polypeptide: Small ribosomal subunit protein uS12m (85 aa).

This sequence belongs to the universal ribosomal protein uS12 family.

The protein localises to the mitochondrion matrix. The protein resides in the kinetoplast. Functionally, protein S12 is involved in the translation initiation step. The sequence is that of Small ribosomal subunit protein uS12m (RPS12) from Leishmania tarentolae (Sauroleishmania tarentolae).